We begin with the raw amino-acid sequence, 91 residues long: MSDERTPQRSSGPRKKRPFQRRKVCRFCADKQVSIDYKDPRTLRYFISERGKIIPRRISGNCAKHQREITEAIKRARNIALLPIAGSHASQ.

The tract at residues 1–21 is disordered; sequence MSDERTPQRSSGPRKKRPFQR. Basic residues predominate over residues 12–21; sequence GPRKKRPFQR.

Belongs to the bacterial ribosomal protein bS18 family. As to quaternary structure, part of the 30S ribosomal subunit. Forms a tight heterodimer with protein bS6.

Binds as a heterodimer with protein bS6 to the central domain of the 16S rRNA, where it helps stabilize the platform of the 30S subunit. The protein is Small ribosomal subunit protein bS18 of Geotalea uraniireducens (strain Rf4) (Geobacter uraniireducens).